The sequence spans 1309 residues: Putative receptor-type tyrosine-protein phosphatase mosPTP-1 (1309 aa).

An N-terminal signal peptide occupies residues 1–36; the sequence is MNSAPRNAGAARSVDRRGFIAACGLLVLLVVRMLGA. The Extracellular segment spans residues 37-572; it reads ADATRIFDIE…RQVYDDYNLA (536 aa). Residues asparagine 60, asparagine 107, asparagine 162, asparagine 257, asparagine 353, asparagine 389, asparagine 455, asparagine 501, and asparagine 513 are each glycosylated (N-linked (GlcNAc...) asparagine). Fibronectin type-III domains follow at residues 147–244, 249–347, 350–449, and 450–553; these read PPGR…TLRE, KPVT…DEGV, KPLN…SGPS, and APKV…LQLH. A helical membrane pass occupies residues 573–593; it reads VLGGIVFSCFGLLLIVLSFLL. Over 594-1309 the chain is Cytoplasmic; it reads WKKCFHAAYY…NHLNLDHNQS (716 aa). Tyrosine-protein phosphatase domains are found at residues 656-921 and 944-1196; these read FSKE…LVEA and IDNQ…LSYM. Cysteine 862 serves as the catalytic Phosphocysteine intermediate. Residues 1239-1269 form a disordered region; that stretch reads NSGDGGGNGNDGVPTGNGTNGGLPMSGGGTT. A compositionally biased stretch (gly residues) spans 1256-1268; it reads GTNGGLPMSGGGT.

It belongs to the protein-tyrosine phosphatase family. Receptor class subfamily. Interacts with C-type lectin mosGCTL-1; the interaction probably mediates the recruitment of West Nile virus particles in complex with C-type lectin mosGCTL-1 to the cell surface. Interacts with C-type lectin mosGCTL-7; the interaction probably mediates the recruitment of Japanese encephalitis virus particles in complex with C-type lectin mosGCTL-7 to the cell surface. Salivary gland (at protein level). Hemolymph. Low-level expression in midgut.

The protein resides in the cell membrane. It carries out the reaction O-phospho-L-tyrosyl-[protein] + H2O = L-tyrosyl-[protein] + phosphate. Putative protein tyrosine-protein phosphatase. In terms of biological role, (Microbial infection) Facilitates West Nile virus infection in mosquitoes probably via recruiting West Nile virus particles in complex with C-type lectin mosGCTL-1 to the cell surface. Its function is as follows. (Microbial infection) Facilitates Japanese encephalitis virus infection in mosquitoes probably via recruiting Japanese encephalitis virus particles in complex with C-type lectin mosGCTL-7 to the cell surface. The chain is Putative receptor-type tyrosine-protein phosphatase mosPTP-1 from Aedes aegypti (Yellowfever mosquito).